The following is a 119-amino-acid chain: MQNKIQVKSVEKRENALIFCAENSEIEVKGLSARNHVLVDSDNLSFLYILENESSFIYVSIPHTCWEAMNNDVVMFVRVNDIEMELEGLKEEVEYLVENIEGNANYGEELVTAVEKVFL.

This sequence belongs to the UPF0738 family.

The polypeptide is UPF0738 protein BAA_1286 (Bacillus anthracis (strain A0248)).